A 183-amino-acid polypeptide reads, in one-letter code: MTSLVVAIGNPGRQYVWTRHNVGFLCVDRLVQQFPGVHFKEAPKLFSDIAKVESSQGSMVFIKPRTYVNLSGKAVLAVKGYYNIATDRILVIADDVNQPFGNVRLRQSAGGGGHKGIKSITQSLGSNDYWQLRLGIGRPQRENVELSDFVLGQFTEEEQIGIQSVFIEASALFSQWCSGTQTA.

Tyrosine 15 contributes to the tRNA binding site. Catalysis depends on histidine 20, which acts as the Proton acceptor. TRNA contacts are provided by tyrosine 67 and asparagine 69.

It belongs to the PTH family. Monomer.

It is found in the cytoplasm. It catalyses the reaction an N-acyl-L-alpha-aminoacyl-tRNA + H2O = an N-acyl-L-amino acid + a tRNA + H(+). Its function is as follows. Hydrolyzes ribosome-free peptidyl-tRNAs (with 1 or more amino acids incorporated), which drop off the ribosome during protein synthesis, or as a result of ribosome stalling. Functionally, catalyzes the release of premature peptidyl moieties from peptidyl-tRNA molecules trapped in stalled 50S ribosomal subunits, and thus maintains levels of free tRNAs and 50S ribosomes. The polypeptide is Peptidyl-tRNA hydrolase (Chlamydia abortus (strain DSM 27085 / S26/3) (Chlamydophila abortus)).